The chain runs to 353 residues: G-protein coupled estrogen receptor 1 (353 aa).

The Extracellular portion of the chain corresponds to 1 to 40; sequence MEEQTTNVIQIYVNGTEQFNASFDFNITDVKESTDTYEFY. The chain crosses the membrane as a helical span at residues 41–61; sequence IIGLFLSCLYTIFLFPIGFIG. Topologically, residues 62-81 are cytoplasmic; the sequence is NILILVVNLNHRERMTIPDL. Residues 82–102 form a helical membrane-spanning segment; the sequence is YFVNLAVADLILVADSLIEVF. Over 103-112 the chain is Extracellular; that stretch reads NLNEKYYDYA. Residues 113 to 133 form a helical membrane-spanning segment; the sequence is VLCTFMSLFLQVNMYSSIFFL. The cysteines at positions 115 and 192 are disulfide-linked. Topologically, residues 134–160 are cytoplasmic; sequence TWMSFDRYVALTSSMSSSPLRTMQHAK. The helical transmembrane segment at 161 to 181 threads the bilayer; sequence LSCSLIWMASILATLLPFTIV. At 182–202 the chain is on the extracellular side; it reads QTQHTGEVHFCFANVFEIQWL. Residues 203 to 223 form a helical membrane-spanning segment; it reads EVTIGFLIPFSIIGLCYSLIV. The Cytoplasmic portion of the chain corresponds to 224–245; that stretch reads RTLMRAQKHKGLWPRRQKALRM. A helical membrane pass occupies residues 246–266; that stretch reads IVVVVLVFFICWLPENVFISI. Topologically, residues 267 to 292 are extracellular; the sequence is QLLQGTADPSKRTDTTLWHDYPLTGH. Residues 293-313 form a helical membrane-spanning segment; the sequence is IVNLAAFSNSCLNPIIYSFLG. At 314–353 the chain is on the cytoplasmic side; that stretch reads ETFRDKLRLFIKRKASWSVVYRFCNHTLDLQIPVRSESEV.

Belongs to the G-protein coupled receptor 1 family. Homodimer. Heterodimer. In terms of tissue distribution, expressed in brain regions that are known to control reproduction and sex behavior. Expressed in ovary, muscle and intestine. Expressed in early germ cells of the testis, including the spermatogonia, spermatocytes, and somatic cells such as Sertoli cells.

Its subcellular location is the nucleus. The protein resides in the cytoplasm. It localises to the perinuclear region. The protein localises to the cytoskeleton. It is found in the cytoplasmic vesicle membrane. Its subcellular location is the cell membrane. The protein resides in the basolateral cell membrane. It localises to the endoplasmic reticulum membrane. The protein localises to the early endosome. It is found in the recycling endosome. Its subcellular location is the golgi apparatus. The protein resides in the trans-Golgi network. It localises to the golgi apparatus membrane. The protein localises to the cell projection. It is found in the dendrite. Its subcellular location is the dendritic spine membrane. The protein resides in the axon. It localises to the postsynaptic density. The protein localises to the mitochondrion membrane. Membrane G-protein coupled estrogen receptor that binds to 17-beta-estradiol (E2) with high affinity, leading to rapid and transient activation of numerous intracellular signaling pathways. Plays a role in the embryonic development of sensory and motor neurons. Specifically induces apoptosis and reduces proliferation of brain cells. Involved in maintenance of meiotic arrest in oocytes. This chain is G-protein coupled estrogen receptor 1 (gper1), found in Danio rerio (Zebrafish).